Consider the following 466-residue polypeptide: Asparagine--tRNA ligase (466 aa).

It belongs to the class-II aminoacyl-tRNA synthetase family. Homodimer.

It localises to the cytoplasm. It catalyses the reaction tRNA(Asn) + L-asparagine + ATP = L-asparaginyl-tRNA(Asn) + AMP + diphosphate + H(+). This is Asparagine--tRNA ligase from Shewanella loihica (strain ATCC BAA-1088 / PV-4).